A 286-amino-acid polypeptide reads, in one-letter code: 33 kDa chaperonin (286 aa).

2 disulfides stabilise this stretch: Cys-225/Cys-227 and Cys-258/Cys-261.

This sequence belongs to the HSP33 family. Under oxidizing conditions two disulfide bonds are formed involving the reactive cysteines. Under reducing conditions zinc is bound to the reactive cysteines and the protein is inactive.

The protein resides in the cytoplasm. In terms of biological role, redox regulated molecular chaperone. Protects both thermally unfolding and oxidatively damaged proteins from irreversible aggregation. Plays an important role in the bacterial defense system toward oxidative stress. This chain is 33 kDa chaperonin, found in Shewanella baltica (strain OS223).